Here is a 188-residue protein sequence, read N- to C-terminus: RxLR effector protein Avh241 (188 aa).

The signal sequence occupies residues 1–16; it reads MRQYCLLLIVLALAAA. Positions 43 to 58 match the RxLR-dEER motif; the sequence is RLLRSEPQDEDTFEDR. The Host plasma membrane localization motif signature appears at 73–78; sequence GAAKAK.

This sequence belongs to the RxLR effector family.

It is found in the secreted. Its subcellular location is the host cell membrane. Effector that triggers cell death in a variety of plant species (including tobacco, tomato and soybean), regardless of the Rps genes present. Avh241 interacts with the plant immune system via at least two different mechanisms, one recognized by plants dependent on subcellular localization and one promoting infection independent on membrane localization. The cell death triggered by Avh241 in N.benthamiana requires the two host mitogen-activated protein kinases, MEK2 and WIPK. This Phytophthora sojae (strain P6497) (Soybean stem and root rot agent) protein is RxLR effector protein Avh241.